The following is a 467-amino-acid chain: Colanic acid biosynthesis protein WcaM (467 aa).

It participates in slime biogenesis; slime polysaccharide biosynthesis. The polypeptide is Colanic acid biosynthesis protein WcaM (wcaM) (Salmonella typhimurium (strain LT2 / SGSC1412 / ATCC 700720)).